A 173-amino-acid polypeptide reads, in one-letter code: MVDSNDDAFDGEKSKTQIKRELHALVELGERLTTLKADTLARLPLTDELRKALAEASKHTAHGARKRHMSFVGKLMRVQDLDAIHALLEQMDSSTRQYNERFHSLERWRDRLIDGNDEDLERFVNEYPDTDRQQLRSLVRHAQHEKARNKPPAAARKVFKYIRDLDELQRGLR.

Belongs to the DarP family.

It is found in the cytoplasm. Member of a network of 50S ribosomal subunit biogenesis factors which assembles along the 30S-50S interface, preventing incorrect 23S rRNA structures from forming. Promotes peptidyl transferase center (PTC) maturation. The protein is Dual-action ribosomal maturation protein DarP of Pseudomonas putida (strain ATCC 700007 / DSM 6899 / JCM 31910 / BCRC 17059 / LMG 24140 / F1).